A 75-amino-acid polypeptide reads, in one-letter code: UPF0154 protein SERP0914 (75 aa).

Residues 3–23 (IWVAIILIVIALIAGLIGGFL) form a helical membrane-spanning segment.

Belongs to the UPF0154 family.

Its subcellular location is the membrane. The polypeptide is UPF0154 protein SERP0914 (Staphylococcus epidermidis (strain ATCC 35984 / DSM 28319 / BCRC 17069 / CCUG 31568 / BM 3577 / RP62A)).